Reading from the N-terminus, the 161-residue chain is uncharacterized protein (161 aa).

This is an uncharacterized protein from Caenorhabditis elegans.